The sequence spans 225 residues: Uracil-DNA glycosylase (225 aa).

D65 serves as the catalytic Proton acceptor.

The protein belongs to the uracil-DNA glycosylase (UDG) superfamily. UNG family.

It localises to the cytoplasm. It catalyses the reaction Hydrolyzes single-stranded DNA or mismatched double-stranded DNA and polynucleotides, releasing free uracil.. In terms of biological role, excises uracil residues from the DNA which can arise as a result of misincorporation of dUMP residues by DNA polymerase or due to deamination of cytosine. The polypeptide is Uracil-DNA glycosylase (Bacillus cereus (strain B4264)).